Consider the following 189-residue polypeptide: MIDQFERLPGIGPRTAQRLALHLLRQPEDQIRAFADALLAARSQVGQCQTCFHLSAEPLCDICRDGKRCDQLLCVVADSRDLLALERTREYKGRYHVLGGLISPMDGIGPDMLQIPSLIQRVDRDGISEVILALTPSVEGDTTSLYLARLLKPFTQVSRIAYGLPVGSELEYADEVTLTRALEGRRAMQ.

The C4-type zinc finger occupies 48 to 63; it reads CQTCFHLSAEPLCDIC. The Toprim domain occupies 71-165; sequence QLLCVVADSR…QVSRIAYGLP (95 aa).

This sequence belongs to the RecR family.

In terms of biological role, may play a role in DNA repair. It seems to be involved in an RecBC-independent recombinational process of DNA repair. It may act with RecF and RecO. The polypeptide is Recombination protein RecR (Prochlorococcus marinus (strain MIT 9313)).